We begin with the raw amino-acid sequence, 312 residues long: Bifunctional pinoresinol-lariciresinol reductase 1 (312 aa).

NADP(+) contacts are provided by residues 10–16, Arg35, and Lys44; that span reads GGTGYIG. Lys136 functions as the Proton acceptor in the catalytic mechanism. Arg140 is a binding site for NADP(+). Position 268 (His268) interacts with substrate.

Belongs to the NmrA-type oxidoreductase family. Isoflavone reductase subfamily. In terms of assembly, dimer. As to expression, expressed in seeds and roots, but not in stems. Detected in leaves.

It carries out the reaction (-)-lariciresinol + NADP(+) = (-)-pinoresinol + NADPH + H(+). The enzyme catalyses (+)-secoisolariciresinol + NADP(+) = (-)-lariciresinol + NADPH + H(+). In terms of biological role, reductase involved in lignan biosynthesis. Catalyzes the enantioselective conversion of (-)-pinoresinol into (-)-lariciresinol and of (-)-lariciresinol into (+)-secoisolariciresinol. Abstracts the 4R-hydride from the NADPH cofactor during catalysis. This chain is Bifunctional pinoresinol-lariciresinol reductase 1 (PLR_Lu1), found in Linum usitatissimum (Flax).